We begin with the raw amino-acid sequence, 400 residues long: Spermatogenic leucine zipper protein 1 (400 aa).

The disordered stretch occupies residues 1–27 (MADSDSSSEMPAHSPSPSPIPCAKQKP). Residue S106 is modified to Phosphoserine. The segment at 116-127 (RNKLRFKDDLFI) is helix-loop-helix motif. Residues 128–193 (HFDPERENTM…HIRGEYRKLR (66 aa)) are basic motif. 2 coiled-coil regions span residues 182-231 (SVHI…KDIV) and 268-293 (LIAALLENECQILQQRVDILRELHLH). S207 carries the post-translational modification Phosphoserine. Residues 252 to 273 (LEEQVKKLSQDTHSLHLIAALL) are leucine-zipper. Residues 295–332 (AGPGHEKPLQTSGEQDKKCGEQDKKCGEQDKKCGEQDK) are disordered.

In terms of assembly, interacts with PPP1CC isoform gamma-2. Phosphorylated by MAPK1/ERK2 and MAPK3/ERK1.

Its subcellular location is the cytoplasm. It is found in the nucleus. Transcription factor that binds to the DNA sequence 5'-CANNTG-3'(E box) and the G-box motif. May play an important role in the regulation of cell proliferation and differentiation during spermatogenesis. The polypeptide is Spermatogenic leucine zipper protein 1 (Spz1) (Rattus norvegicus (Rat)).